The sequence spans 282 residues: Probable endonuclease 4 (282 aa).

Zn(2+) is bound by residues H67, H107, E144, D178, H181, H215, D228, H230, and E260.

The protein belongs to the AP endonuclease 2 family. Zn(2+) serves as cofactor.

It catalyses the reaction Endonucleolytic cleavage to 5'-phosphooligonucleotide end-products.. In terms of biological role, endonuclease IV plays a role in DNA repair. It cleaves phosphodiester bonds at apurinic or apyrimidinic (AP) sites, generating a 3'-hydroxyl group and a 5'-terminal sugar phosphate. The chain is Probable endonuclease 4 from Methanoculleus marisnigri (strain ATCC 35101 / DSM 1498 / JR1).